The primary structure comprises 373 residues: Chorismate synthase (373 aa).

Position 46 (Arg-46) interacts with NADP(+). FMN contacts are provided by residues 123–125 (RSS), 251–252 (NA), Gly-295, 310–314 (KPTPS), and Arg-337.

This sequence belongs to the chorismate synthase family. FMNH2 serves as cofactor.

It carries out the reaction 5-O-(1-carboxyvinyl)-3-phosphoshikimate = chorismate + phosphate. The protein operates within metabolic intermediate biosynthesis; chorismate biosynthesis; chorismate from D-erythrose 4-phosphate and phosphoenolpyruvate: step 7/7. Functionally, catalyzes the anti-1,4-elimination of the C-3 phosphate and the C-6 proR hydrogen from 5-enolpyruvylshikimate-3-phosphate (EPSP) to yield chorismate, which is the branch point compound that serves as the starting substrate for the three terminal pathways of aromatic amino acid biosynthesis. This reaction introduces a second double bond into the aromatic ring system. This chain is Chorismate synthase, found in Methanococcus maripaludis (strain C7 / ATCC BAA-1331).